We begin with the raw amino-acid sequence, 148 residues long: uncharacterized protein (148 aa).

A compositionally biased stretch (low complexity) spans 65–79 (VDSTPSVDSTGSTSD). Positions 65–85 (VDSTPSVDSTGSTSDVVDDRG) are disordered.

This is an uncharacterized protein from Saccharomyces cerevisiae (strain ATCC 204508 / S288c) (Baker's yeast).